The chain runs to 372 residues: NAD(P)H-quinone oxidoreductase subunit 1 (372 aa).

8 consecutive transmembrane segments (helical) span residues 28–48 (IWLPLPLLLMIIGATVGVLVV), 97–117 (WLFTLGPALVVIPVFLSYLIV), 130–150 (VGIFLWISLSSIAPIGLLMSG), 176–196 (LALAVLAIAMMSNSLSTIDIV), 204–224 (ILGWNIWRQPVGFLIFWIAAL), 265–285 (LVLSALIVSILYLGGWEFPIP), 308–328 (SLGIIMTLVKTYALVFIAVLL), and 351–371 (VALVNLLLTAALKLAFPIAFG).

Belongs to the complex I subunit 1 family. NDH-1 is composed of at least 11 different subunits.

It localises to the cellular thylakoid membrane. It carries out the reaction a plastoquinone + NADH + (n+1) H(+)(in) = a plastoquinol + NAD(+) + n H(+)(out). It catalyses the reaction a plastoquinone + NADPH + (n+1) H(+)(in) = a plastoquinol + NADP(+) + n H(+)(out). Functionally, NDH-1 shuttles electrons from an unknown electron donor, via FMN and iron-sulfur (Fe-S) centers, to quinones in the respiratory and/or the photosynthetic chain. The immediate electron acceptor for the enzyme in this species is believed to be plastoquinone. Couples the redox reaction to proton translocation, and thus conserves the redox energy in a proton gradient. The protein is NAD(P)H-quinone oxidoreductase subunit 1 of Picosynechococcus sp. (strain ATCC 27264 / PCC 7002 / PR-6) (Agmenellum quadruplicatum).